A 246-amino-acid polypeptide reads, in one-letter code: Probable transcriptional regulatory protein YebC (246 aa).

The interval 1–20 (MAGHSKWANTRHRKAAQDAK) is disordered.

Belongs to the TACO1 family.

The protein resides in the cytoplasm. The polypeptide is Probable transcriptional regulatory protein YebC (Shigella dysenteriae serotype 1 (strain Sd197)).